The sequence spans 513 residues: MNNNVITRFAPSPTGFLHIGSARTALFNYLFARHHNGKFLLRIEDTDKERSTKEAVEAIFSGLKWLGLDWNGEVIFQSKRNNLYKEAALKLLQNGKAYYCFTRQEEIERQRQQALENKQHFIFNSEWRDKDPSIYPTDIKPVIRLKTPREGSITIHDTLQGEVVIENSHIDDMVLLRADGTATYMLAVVVDDHDMGITHIIRGDDHLTNTARQLAIYQAFGYAVPSMTHIPLIHGADGAKLSKRHGALGIEAYKDMGYLPESLCNYLLRLGWSHGDDEIISMTQAIDWFNLDSLGKSPSKLDFAKMNSLNAHYLRMLDNDSLTSKTVEILEQNYNTLLRHLPYREEFGGNTERSTAAYIDIREDASTGLTYKLPLAVELPKKFKISEQEIGYIKQAMPSLLVRSETLLELTRLAQIYLVDSPIIYSQDSKEIIENCDKNLIKQIIENLSELEQFDKESVQNKFKEIAAANDLKLNDIMKPVRALITGMTASPSIFEIAEILGKENILKRLKII.

The 'HIGH' region signature appears at 11-21 (PSPTGFLHIGS). A 'KMSKS' region motif is present at residues 240-244 (KLSKR). Position 243 (K243) interacts with ATP. One can recognise an RPE1 insert domain in the interval 335-383 (NTLLRHLPYREEFGGNTERSTAAYIDIREDASTGLTYKLPLAVELPKKF).

The protein belongs to the class-I aminoacyl-tRNA synthetase family. Glutamate--tRNA ligase type 1 subfamily. Monomer.

Its subcellular location is the cytoplasm. The enzyme catalyses tRNA(Glu) + L-glutamate + ATP = L-glutamyl-tRNA(Glu) + AMP + diphosphate. In terms of biological role, catalyzes the attachment of glutamate to tRNA(Glu) in a two-step reaction: glutamate is first activated by ATP to form Glu-AMP and then transferred to the acceptor end of tRNA(Glu). This chain is Glutamate--tRNA ligase 2, found in Rickettsia conorii (strain ATCC VR-613 / Malish 7).